The chain runs to 1266 residues: Phosphatidylinositol 3,4,5-trisphosphate 5-phosphatase 2A (1266 aa).

Residues 15–111 (WMHRDLSRAA…GLVTTLLYPV (97 aa)) form the SH2 domain. Basic and acidic residues predominate over residues 114-123 (EETTEDRDYS). Disordered stretches follow at residues 114-159 (EETT…NVTA) and 879-951 (DMGG…DATT). Over residues 136-159 (TASTSSMTGSALVSTDTPPENVTA) the composition is skewed to polar residues. Composition is skewed to basic and acidic residues over residues 915–924 (RVSEEGEKSS) and 931–944 (TKEE…KQDP). The short motif at 958–961 (NPAY) is the NPXY motif element. A Phosphotyrosine modification is found at Tyr961. Disordered regions lie at residues 986–1132 (PLAN…SALD) and 1147–1174 (EVEY…SFPS). Residues 994–1012 (PPAGSVGKSKPPSGSSAQG) show a composition bias toward low complexity. Pro residues predominate over residues 1045-1056 (RPPPDFPPPPLP). The 64-residue stretch at 1203 to 1266 (SVDCSVGEWL…LLASLKQQQK (64 aa)) folds into the SAM domain.

The protein belongs to the inositol 1,4,5-trisphosphate 5-phosphatase family. In terms of processing, tyrosine phosphorylated by the members of the SRC family after exposure to a diverse array of extracellular stimuli.

Its subcellular location is the cytoplasm. It localises to the cytosol. The protein localises to the cytoskeleton. The protein resides in the membrane. It is found in the cell projection. Its subcellular location is the filopodium. It localises to the lamellipodium. The protein localises to the nucleus. The protein resides in the nucleus speckle. It carries out the reaction a 1,2-diacyl-sn-glycero-3-phospho-(1D-myo-inositol-3,4,5-trisphosphate) + H2O = a 1,2-diacyl-sn-glycero-3-phospho-(1D-myo-inositol-3,4-bisphosphate) + phosphate. Functionally, phosphatidylinositol (PtdIns) phosphatase that specifically hydrolyzes the 5-phosphate of phosphatidylinositol-3,4,5-trisphosphate (PtdIns(3,4,5)P3) to produce PtdIns(3,4)P2, thereby negatively regulating the PI3K (phosphoinositide 3-kinase) pathways. Plays a central role in regulation of PI3K-dependent insulin signaling, although the precise molecular mechanisms and signaling pathways remain unclear. Part of a signaling pathway that regulates actin cytoskeleton remodeling. Required for the maintenance and dynamic remodeling of actin structures as well as in endocytosis, having a major impact on ligand-induced EGFR internalization and degradation. Participates in regulation of cortical and submembraneous actin. Regulates cell adhesion and cell spreading. Acts as a negative regulator of the FC-gamma-RIIA receptor (FCGR2A). Mediates signaling from the FC-gamma-RIIB receptor (FCGR2B), playing a central role in terminating signal transduction from activating immune/hematopoietic cell receptor systems. May also hydrolyze PtdIns(1,3,4,5)P4, and could thus affect the levels of the higher inositol polyphosphates like InsP6. This chain is Phosphatidylinositol 3,4,5-trisphosphate 5-phosphatase 2A (inppl1a), found in Danio rerio (Zebrafish).